Reading from the N-terminus, the 224-residue chain is Putative tyrosine-protein phosphatase OCA6 (224 aa).

Phosphothreonine is present on Thr2. Positions 8–170 (QFSTVQPNLY…FNSEIEVDDL (163 aa)) constitute a Tyrosine-protein phosphatase domain. Catalysis depends on Cys114, which acts as the Phosphocysteine intermediate.

The protein belongs to the protein-tyrosine phosphatase family.

It localises to the cytoplasm. The enzyme catalyses O-phospho-L-tyrosyl-[protein] + H2O = L-tyrosyl-[protein] + phosphate. Required for replication of Brome mosaic virus (BMV). This chain is Putative tyrosine-protein phosphatase OCA6 (OCA6), found in Saccharomyces cerevisiae (strain ATCC 204508 / S288c) (Baker's yeast).